The sequence spans 340 residues: Alcohol dehydrogenase patD (340 aa).

Cysteine 46 contacts Zn(2+). Histidine 47 lines the NAD(+) pocket. Zn(2+) is bound by residues histidine 67, glutamate 68, cysteine 101, cysteine 104, cysteine 112, and cysteine 154. Position 67 (histidine 67) interacts with substrate. Residues 178–183, 198–203, lysine 206, 265–267, 289–291, and 297–299 contribute to the NAD(+) site; these read GLGGLG, VALSRD, LSI, PSG, and EDA.

Belongs to the zinc-containing alcohol dehydrogenase family. Requires Zn(2+) as cofactor.

It is found in the cytoplasm. The protein resides in the cytosol. The catalysed reaction is neopatulin + NADPH + H(+) = (E)-ascladiol + NADP(+). It functions in the pathway mycotoxin biosynthesis; patulin biosynthesis. In terms of biological role, alcohol dehydrogenase; part of the gene cluster that mediates the biosynthesis of patulin, an acetate-derived tetraketide mycotoxin produced by several fungal species that shows antimicrobial properties against several bacteria. PatD catalyzes the conversion of neopatulin into E-ascladiol. The pathway begins with the synthesis of 6-methylsalicylic acid by the polyketide synthase (PKS) patK via condensation of acetate and malonate units. The 6-methylsalicylic acid decarboxylase patG then catalyzes the decarboxylation of 6-methylsalicylic acid to yield m-cresol (also known as 3-methylphenol). These first reactions occur in the cytosol. The intermediate m-cresol is then transported into the endoplasmic reticulum where the cytochrome P450 monooxygenase patH converts it to m-hydroxybenzyl alcohol, which is further converted to gentisyl alcohol by the cytochrome P450 monooxygenase patI. The oxidoreductases patJ and patO further convert gentisyl alcohol to isoepoxydon in the vacuole. PatN catalyzes then the transformation of isoepoxydon into phyllostine. The cluster protein patF is responsible for the conversion from phyllostine to neopatulin whereas the alcohol dehydrogenase patD converts neopatulin to E-ascladiol. The steps between isoepoxydon and E-ascladiol occur in the cytosol, and E-ascladiol is probably secreted to the extracellular space by one of the cluster-specific transporters patC or patM. Finally, the secreted patulin synthase patE catalyzes the conversion of E-ascladiol to patulin. The polypeptide is Alcohol dehydrogenase patD (Penicillium expansum (Blue mold rot fungus)).